The chain runs to 806 residues: Glycerol-3-phosphate acyltransferase (806 aa).

The short motif at 305–310 (CHRSHM) is the HXXXXD motif element.

This sequence belongs to the GPAT/DAPAT family.

It is found in the cell inner membrane. The catalysed reaction is sn-glycerol 3-phosphate + an acyl-CoA = a 1-acyl-sn-glycero-3-phosphate + CoA. Its pathway is phospholipid metabolism; CDP-diacylglycerol biosynthesis; CDP-diacylglycerol from sn-glycerol 3-phosphate: step 1/3. The polypeptide is Glycerol-3-phosphate acyltransferase (Escherichia fergusonii (strain ATCC 35469 / DSM 13698 / CCUG 18766 / IAM 14443 / JCM 21226 / LMG 7866 / NBRC 102419 / NCTC 12128 / CDC 0568-73)).